The following is a 424-amino-acid chain: Histidine--tRNA ligase (424 aa).

It belongs to the class-II aminoacyl-tRNA synthetase family. As to quaternary structure, homodimer.

The protein resides in the cytoplasm. The enzyme catalyses tRNA(His) + L-histidine + ATP = L-histidyl-tRNA(His) + AMP + diphosphate + H(+). The sequence is that of Histidine--tRNA ligase from Salmonella heidelberg (strain SL476).